The chain runs to 101 residues: Large ribosomal subunit protein uL24 (101 aa).

This sequence belongs to the universal ribosomal protein uL24 family. Part of the 50S ribosomal subunit.

In terms of biological role, one of two assembly initiator proteins, it binds directly to the 5'-end of the 23S rRNA, where it nucleates assembly of the 50S subunit. Functionally, one of the proteins that surrounds the polypeptide exit tunnel on the outside of the subunit. The protein is Large ribosomal subunit protein uL24 of Borreliella afzelii (strain PKo) (Borrelia afzelii).